The following is a 307-amino-acid chain: Malonyl-[acyl-carrier protein] O-methyltransferase (307 aa).

The protein belongs to the methyltransferase superfamily.

It carries out the reaction malonyl-[ACP] + S-adenosyl-L-methionine = malonyl-[ACP] methyl ester + S-adenosyl-L-homocysteine. It functions in the pathway cofactor biosynthesis; biotin biosynthesis. In terms of biological role, converts the free carboxyl group of a malonyl-thioester to its methyl ester by transfer of a methyl group from S-adenosyl-L-methionine (SAM). It allows to synthesize pimeloyl-ACP via the fatty acid synthetic pathway. The chain is Malonyl-[acyl-carrier protein] O-methyltransferase from Nitrosospira multiformis (strain ATCC 25196 / NCIMB 11849 / C 71).